The primary structure comprises 272 residues: Regulatory factor X-associated protein (272 aa).

Disordered stretches follow at residues 1–20 (MEAQ…GVPH), 74–142 (LCEG…KTCT), and 175–195 (KKKK…GSAG). Residues 79–94 (GDGEEEAGEDEADLLD) are compositionally biased toward acidic residues. Residues 163–178 (KKHRNKMYKDKYKKKK) carry the Nuclear localization signal motif. Lys-198 participates in a covalent cross-link: Glycyl lysine isopeptide (Lys-Gly) (interchain with G-Cter in SUMO2). The interval 214 to 270 (TGSFGDRPARPTLLEQVLNQKRLSLLRSPEVVQFLQKQQQLLNQQVLEQRQQQFPGT) is C-terminal domain.

As to quaternary structure, the RFX heterotetrameric complex consists of 2 molecules of RFX5 and one each of RFXAP and RFX-B/RFXANK; with each subunit representing a separate complementation group. RFX forms cooperative DNA binding complexes with X2BP and CBF/NF-Y. RFX associates with CIITA to form an active transcriptional complex. Phosphorylated. In terms of tissue distribution, ubiquitous.

The protein resides in the nucleus. In terms of biological role, part of the RFX complex that binds to the X-box of MHC II promoters. The sequence is that of Regulatory factor X-associated protein (RFXAP) from Homo sapiens (Human).